Consider the following 316-residue polypeptide: Small ribosomal subunit protein RACK1 (316 aa).

7 WD repeats span residues 13–44 (GHNG…IIWN), 61–91 (GHSH…RLWE), 103–133 (GHTN…KLWN), 146–178 (GHTE…KVWE), 190–220 (GHTG…MLWD), 231–260 (NAND…IIFD), and 281–311 (SREP…RAWG).

It belongs to the WD repeat G protein beta family. Ribosomal protein RACK1 subfamily. As to quaternary structure, component of the small ribosomal subunit (SSU). Mature N.crassa ribosomes consist of a small (40S) and a large (60S) subunit. The 40S small subunit contains 1 molecule of ribosomal RNA (18S rRNA) and at least 32 different proteins. The large 60S subunit contains 3 rRNA molecules (26S, 5.8S and 5S rRNA) and at least 42 different proteins.

It is found in the cytoplasm. Functionally, component of the ribosome, a large ribonucleoprotein complex responsible for the synthesis of proteins in the cell. The small ribosomal subunit (SSU) binds messenger RNAs (mRNAs) and translates the encoded message by selecting cognate aminoacyl-transfer RNA (tRNA) molecules. The large subunit (LSU) contains the ribosomal catalytic site termed the peptidyl transferase center (PTC), which catalyzes the formation of peptide bonds, thereby polymerizing the amino acids delivered by tRNAs into a polypeptide chain. The nascent polypeptides leave the ribosome through a tunnel in the LSU and interact with protein factors that function in enzymatic processing, targeting, and the membrane insertion of nascent chains at the exit of the ribosomal tunnel. Required to activate general amino acid control under conditions of amino acid limitation in the vegetative growth phase, and for formation of protoperithecia in preparation for the sexual phase of the life cycle of N.crassa. The sequence is that of Small ribosomal subunit protein RACK1 (cpc-2) from Neurospora crassa (strain ATCC 24698 / 74-OR23-1A / CBS 708.71 / DSM 1257 / FGSC 987).